A 226-amino-acid polypeptide reads, in one-letter code: UPF0173 metal-dependent hydrolase GFO_2312 (226 aa).

This sequence belongs to the UPF0173 family.

The polypeptide is UPF0173 metal-dependent hydrolase GFO_2312 (Christiangramia forsetii (strain DSM 17595 / CGMCC 1.15422 / KT0803) (Gramella forsetii)).